The chain runs to 408 residues: Putative polysaccharide ligase RBE_0399 (408 aa).

The next 10 membrane-spanning stretches (helical) occupy residues F5–V25, M72–I92, P94–V114, L130–F150, M163–I183, L192–L212, I230–A250, I325–Y345, F359–S377, and V380–V400.

Belongs to the O-antigen ligase family.

It is found in the membrane. This chain is Putative polysaccharide ligase RBE_0399 (rfaL), found in Rickettsia bellii (strain RML369-C).